The following is a 270-amino-acid chain: 4-hydroxy-tetrahydrodipicolinate reductase (270 aa).

NAD(+)-binding positions include 9-14 (GAGGRM) and E35. Residue R36 participates in NADP(+) binding. NAD(+) contacts are provided by residues 99 to 101 (GTT) and 123 to 126 (ASNF). The Proton donor/acceptor role is filled by H156. A (S)-2,3,4,5-tetrahydrodipicolinate-binding site is contributed by H157. Residue K160 is the Proton donor of the active site. 166–167 (GT) contributes to the (S)-2,3,4,5-tetrahydrodipicolinate binding site.

This sequence belongs to the DapB family.

Its subcellular location is the cytoplasm. It carries out the reaction (S)-2,3,4,5-tetrahydrodipicolinate + NAD(+) + H2O = (2S,4S)-4-hydroxy-2,3,4,5-tetrahydrodipicolinate + NADH + H(+). It catalyses the reaction (S)-2,3,4,5-tetrahydrodipicolinate + NADP(+) + H2O = (2S,4S)-4-hydroxy-2,3,4,5-tetrahydrodipicolinate + NADPH + H(+). Its pathway is amino-acid biosynthesis; L-lysine biosynthesis via DAP pathway; (S)-tetrahydrodipicolinate from L-aspartate: step 4/4. Functionally, catalyzes the conversion of 4-hydroxy-tetrahydrodipicolinate (HTPA) to tetrahydrodipicolinate. This Haemophilus influenzae (strain ATCC 51907 / DSM 11121 / KW20 / Rd) protein is 4-hydroxy-tetrahydrodipicolinate reductase.